A 296-amino-acid chain; its full sequence is Ribosomal RNA small subunit methyltransferase A (296 aa).

6 residues coordinate S-adenosyl-L-methionine: Asn-30, Leu-32, Gly-57, Glu-78, Asp-103, and Asn-128.

The protein belongs to the class I-like SAM-binding methyltransferase superfamily. rRNA adenine N(6)-methyltransferase family. RsmA subfamily.

The protein resides in the cytoplasm. The enzyme catalyses adenosine(1518)/adenosine(1519) in 16S rRNA + 4 S-adenosyl-L-methionine = N(6)-dimethyladenosine(1518)/N(6)-dimethyladenosine(1519) in 16S rRNA + 4 S-adenosyl-L-homocysteine + 4 H(+). In terms of biological role, specifically dimethylates two adjacent adenosines (A1518 and A1519) in the loop of a conserved hairpin near the 3'-end of 16S rRNA in the 30S particle. May play a critical role in biogenesis of 30S subunits. The protein is Ribosomal RNA small subunit methyltransferase A of Staphylococcus epidermidis (strain ATCC 35984 / DSM 28319 / BCRC 17069 / CCUG 31568 / BM 3577 / RP62A).